A 320-amino-acid chain; its full sequence is Peptidase 1 (320 aa).

An N-terminal signal peptide occupies residues 1–18 (MKIVLAIASLLALSAVYA). Residues 19–98 (RPSSIKTFEE…LKTQFDLNAE (80 aa)) constitute a propeptide, activation peptide. Cystine bridges form between Cys-102-Cys-215, Cys-129-Cys-169, and Cys-163-Cys-201. Residue Cys-132 is part of the active site. N-linked (GlcNAc...) asparagine glycosylation is present at Asn-150. Catalysis depends on residues His-268 and Asn-288.

This sequence belongs to the peptidase C1 family. N-glycosylated. N-glycanase treatment does not completely remove carbohydrates, suggesting that the protein contains additional glycosylation sites.

It is found in the secreted. The catalysed reaction is Broad endopeptidase specificity.. Thiol protease, with a preference for substrates with a large hydrophobic side chain in the P2 position, or with basic residues. The chain is Peptidase 1 (DERP1) from Dermatophagoides pteronyssinus (European house dust mite).